We begin with the raw amino-acid sequence, 361 residues long: Replication factor C subunit 3 (361 aa).

Low complexity predominate over residues 1–28; sequence MAGATAATPMDIDAAAPPPGAAAKGKAP. Positions 1-39 are disordered; that stretch reads MAGATAATPMDIDAAAPPPGAAAKGKAPLSSTPGGRAAP. 77 to 84 contributes to the ATP binding site; the sequence is YGPPGTGK.

This sequence belongs to the activator 1 small subunits family. Heterotetramer of subunits RFC2, RFC3, RFC4 and RFC5 that can form a complex with RFC1. Expressed in roots, leaves, shoot apical meristem (SAM), flag leaves and panicles.

The protein resides in the nucleus. Functionally, may be involved in DNA replication and thus regulate cell proliferation. The polypeptide is Replication factor C subunit 3 (RFC3) (Oryza sativa subsp. japonica (Rice)).